Consider the following 359-residue polypeptide: tRNA-specific 2-thiouridylase MnmA (359 aa).

ATP contacts are provided by residues 6–13 (AMSGGVDS) and leucine 32. Cysteine 97 functions as the Nucleophile in the catalytic mechanism. Cysteine 97 and cysteine 195 are oxidised to a cystine. Glycine 121 is an ATP binding site. Residues 144 to 146 (KDQ) are interaction with tRNA. Cysteine 195 (cysteine persulfide intermediate) is an active-site residue.

This sequence belongs to the MnmA/TRMU family.

Its subcellular location is the cytoplasm. It carries out the reaction S-sulfanyl-L-cysteinyl-[protein] + uridine(34) in tRNA + AH2 + ATP = 2-thiouridine(34) in tRNA + L-cysteinyl-[protein] + A + AMP + diphosphate + H(+). In terms of biological role, catalyzes the 2-thiolation of uridine at the wobble position (U34) of tRNA, leading to the formation of s(2)U34. This is tRNA-specific 2-thiouridylase MnmA from Tropheryma whipplei (strain TW08/27) (Whipple's bacillus).